The sequence spans 61 residues: DNA-directed RNA polymerase subunit Rpo6 (61 aa).

This sequence belongs to the archaeal Rpo6/eukaryotic RPB6 RNA polymerase subunit family. Part of the RNA polymerase complex.

The protein localises to the cytoplasm. The enzyme catalyses RNA(n) + a ribonucleoside 5'-triphosphate = RNA(n+1) + diphosphate. DNA-dependent RNA polymerase (RNAP) catalyzes the transcription of DNA into RNA using the four ribonucleoside triphosphates as substrates. This chain is DNA-directed RNA polymerase subunit Rpo6, found in Thermoplasma volcanium (strain ATCC 51530 / DSM 4299 / JCM 9571 / NBRC 15438 / GSS1).